The primary structure comprises 215 residues: ATP phosphoribosyltransferase (215 aa).

The protein belongs to the ATP phosphoribosyltransferase family. Short subfamily. In terms of assembly, heteromultimer composed of HisG and HisZ subunits.

It is found in the cytoplasm. It carries out the reaction 1-(5-phospho-beta-D-ribosyl)-ATP + diphosphate = 5-phospho-alpha-D-ribose 1-diphosphate + ATP. Its pathway is amino-acid biosynthesis; L-histidine biosynthesis; L-histidine from 5-phospho-alpha-D-ribose 1-diphosphate: step 1/9. In terms of biological role, catalyzes the condensation of ATP and 5-phosphoribose 1-diphosphate to form N'-(5'-phosphoribosyl)-ATP (PR-ATP). Has a crucial role in the pathway because the rate of histidine biosynthesis seems to be controlled primarily by regulation of HisG enzymatic activity. In Lachnoclostridium phytofermentans (strain ATCC 700394 / DSM 18823 / ISDg) (Clostridium phytofermentans), this protein is ATP phosphoribosyltransferase.